We begin with the raw amino-acid sequence, 185 residues long: Peptidyl-tRNA hydrolase (185 aa).

Position 14 (tyrosine 14) interacts with tRNA. The active-site Proton acceptor is histidine 19. TRNA is bound by residues tyrosine 65, asparagine 67, and asparagine 113.

It belongs to the PTH family. In terms of assembly, monomer.

It is found in the cytoplasm. It catalyses the reaction an N-acyl-L-alpha-aminoacyl-tRNA + H2O = an N-acyl-L-amino acid + a tRNA + H(+). Its function is as follows. Hydrolyzes ribosome-free peptidyl-tRNAs (with 1 or more amino acids incorporated), which drop off the ribosome during protein synthesis, or as a result of ribosome stalling. In terms of biological role, catalyzes the release of premature peptidyl moieties from peptidyl-tRNA molecules trapped in stalled 50S ribosomal subunits, and thus maintains levels of free tRNAs and 50S ribosomes. The sequence is that of Peptidyl-tRNA hydrolase from Rickettsia typhi (strain ATCC VR-144 / Wilmington).